A 1131-amino-acid polypeptide reads, in one-letter code: Probable secreted beta-glucosidase adg3 (1131 aa).

Residues 1-23 (MPSKIEKICLLLLGFTAASNVNA) form the signal peptide. Asparagine 58, asparagine 123, asparagine 252, asparagine 551, asparagine 593, asparagine 631, and asparagine 689 each carry an N-linked (GlcNAc...) asparagine glycan. The disordered stretch occupies residues 609–819 (GTTSSTSEIV…SSPISSNSVT (211 aa)). The segment covering 623 to 715 (SNSNTGSLNG…YSDPTTTITS (93 aa)) has biased composition (low complexity). The span at 716–725 (EVSSILSSPT) shows a compositional bias: polar residues. Residues 726–737 (SMQSSVSRPQSS) are compositionally biased toward low complexity. Over residues 738-763 (GDASGFNTIFTSISQSSDGETSGYTI) the composition is skewed to polar residues. Composition is skewed to low complexity over residues 764–773 (SSNSSQNSAS) and 780–819 (TSSSSSATPTITQSSISTSVSSQSSMNSSYSSPISSNSVT). N-linked (GlcNAc...) asparagine glycans are attached at residues asparagine 766, asparagine 806, and asparagine 857. Residues 893-909 (STSNSGSTSYSIPSSSS) are compositionally biased toward low complexity. The disordered stretch occupies residues 893–918 (STSNSGSTSYSIPSSSSRNEGTTSYS). The N-linked (GlcNAc...) asparagine glycan is linked to asparagine 920. A compositionally biased stretch (low complexity) spans 977–1027 (LTVKPESSLSSSTTSGLTSSSSTIPSSTRSESNSESASTSSASKRSSSSTS). Positions 977–1031 (LTVKPESSLSSSTTSGLTSSSSTIPSSTRSESNSESASTSSASKRSSSSTSLVQS) are disordered.

Belongs to the SUN family.

The protein localises to the secreted. Cell surface beta-glucosidase involved in cell wall biogenesis,. In Schizosaccharomyces pombe (strain 972 / ATCC 24843) (Fission yeast), this protein is Probable secreted beta-glucosidase adg3 (adg3).